A 288-amino-acid chain; its full sequence is Mortality factor 4-like protein 2 (288 aa).

The span at 1 to 15 (MSSRKQGSQPRGQQS) shows a compositional bias: polar residues. The disordered stretch occupies residues 1 to 113 (MSSRKQGSQP…RADPTVESEE (113 aa)). The residue at position 71 (Ser71) is a Phosphoserine. In terms of domain architecture, MRG spans 117-288 (NRMEVKVKIP…ASAEYHRKAL (172 aa)).

Component of the NuA4 histone acetyltransferase complex which contains the catalytic subunit KAT5/TIP60 and the subunits EP400, TRRAP/PAF400, BRD8/SMAP, EPC1, DMAP1/DNMAP1, RUVBL1/TIP49, RUVBL2, ING3, actin, ACTL6A/BAF53A, MORF4L1/MRG15, MORF4L2/MRGX, MRGBP, YEATS4/GAS41 and VPS72/YL1. The NuA4 complex interacts with MYC and the adenovirus E1A protein. MORF4L1 may also participate in the formation of NuA4 related complexes which lack the KAT5/TIP60 catalytic subunit, but which include the SWI/SNF related protein SRCAP. Component of the MSIN3A histone deacetylase complex, which includes SIN3A, HDAC2, ARID4B, MORF4L1, RBBP4/RbAp48, and RBBP7/RbAp46. Interacts with MRFAP1 and RB1. May also interact with one or more as yet undefined members of the TLE (transducin-like enhancer of split) family of transcriptional repressors.

The protein localises to the nucleus. Component of the NuA4 histone acetyltransferase complex which is involved in transcriptional activation of select genes principally by acetylation of nucleosomal histone H4 and H2A. This modification may both alter nucleosome - DNA interactions and promote interaction of the modified histones with other proteins which positively regulate transcription. This complex may be required for the activation of transcriptional programs associated with oncogene and proto-oncogene mediated growth induction, tumor suppressor mediated growth arrest and replicative senescence, apoptosis, and DNA repair. The NuA4 complex ATPase and helicase activities seem to be, at least in part, contributed by the association of RUVBL1 and RUVBL2 with EP400. NuA4 may also play a direct role in DNA repair when directly recruited to sites of DNA damage. Also a component of the MSIN3A complex which acts to repress transcription by deacetylation of nucleosomal histones. This chain is Mortality factor 4-like protein 2 (MORF4L2), found in Macaca fascicularis (Crab-eating macaque).